The sequence spans 217 residues: tRNA (guanine-N(7)-)-methyltransferase (217 aa).

4 residues coordinate S-adenosyl-L-methionine: E44, E69, N96, and D118. D118 is a catalytic residue. K122 contributes to the substrate binding site. The interval 124-129 is interaction with RNA; that stretch reads RHEKRR. Substrate contacts are provided by residues D154 and 191–194; that span reads TEYE.

This sequence belongs to the class I-like SAM-binding methyltransferase superfamily. TrmB family.

It carries out the reaction guanosine(46) in tRNA + S-adenosyl-L-methionine = N(7)-methylguanosine(46) in tRNA + S-adenosyl-L-homocysteine. It functions in the pathway tRNA modification; N(7)-methylguanine-tRNA biosynthesis. Its function is as follows. Catalyzes the formation of N(7)-methylguanine at position 46 (m7G46) in tRNA. The protein is tRNA (guanine-N(7)-)-methyltransferase of Geobacillus kaustophilus (strain HTA426).